A 449-amino-acid chain; its full sequence is N-succinylarginine dihydrolase (449 aa).

Residues 19–28 (GGLSYGNVAS), N110, and 137–138 (HR) each bind substrate. Residues 23–43 (YGNVASQSNSQQGSNPREAAR) form a disordered region. The segment covering 25–37 (NVASQSNSQQGSN) has biased composition (polar residues). The active site involves E174. R214 provides a ligand contact to substrate. H250 is a catalytic residue. 2 residues coordinate substrate: D252 and N365. C371 acts as the Nucleophile in catalysis.

This sequence belongs to the succinylarginine dihydrolase family. Homodimer.

It catalyses the reaction N(2)-succinyl-L-arginine + 2 H2O + 2 H(+) = N(2)-succinyl-L-ornithine + 2 NH4(+) + CO2. It functions in the pathway amino-acid degradation; L-arginine degradation via AST pathway; L-glutamate and succinate from L-arginine: step 2/5. In terms of biological role, catalyzes the hydrolysis of N(2)-succinylarginine into N(2)-succinylornithine, ammonia and CO(2). The polypeptide is N-succinylarginine dihydrolase (Pseudomonas putida (strain GB-1)).